The sequence spans 920 residues: Isoleucine--tRNA ligase (920 aa).

Residues 58-68 (PYANGHLHLGH) carry the 'HIGH' region motif. Residue E569 coordinates L-isoleucyl-5'-AMP. Residues 610–614 (KMSKS) carry the 'KMSKS' region motif. K613 is an ATP binding site. Residues C895, C898, C910, and C913 each coordinate Zn(2+).

The protein belongs to the class-I aminoacyl-tRNA synthetase family. IleS type 1 subfamily. Monomer. It depends on Zn(2+) as a cofactor.

Its subcellular location is the cytoplasm. The catalysed reaction is tRNA(Ile) + L-isoleucine + ATP = L-isoleucyl-tRNA(Ile) + AMP + diphosphate. Its function is as follows. Catalyzes the attachment of isoleucine to tRNA(Ile). As IleRS can inadvertently accommodate and process structurally similar amino acids such as valine, to avoid such errors it has two additional distinct tRNA(Ile)-dependent editing activities. One activity is designated as 'pretransfer' editing and involves the hydrolysis of activated Val-AMP. The other activity is designated 'posttransfer' editing and involves deacylation of mischarged Val-tRNA(Ile). This chain is Isoleucine--tRNA ligase, found in Helicobacter pylori (strain G27).